The primary structure comprises 544 residues: MTKFIFVTGGVVSSLGKGITAASLAAVLEARGVNVTMTKMDPYINVDPGTMSPFQHGEVFVTEDGAETDLDLGYYERFLRHSKMSKSNNFTSGRIYQNVLNKERRGEYLGGTVQVIPHITDEIKSKILASGEGYDVAIIEIGGTVGDIESLPFMEAVRQMQVELGRHRAMLMHLTLVPYIASAGETKTKPTQHSVKELRSIGLQPDILICRSDHHISPDNRRKIALFTNVEERAVIMCEDAQSIYQIPRTLHEQDLDDLICERFGLDLPEADLSDWDKVVEAQLNPESTVTVAMVGKYVELPDAYKSINEALLHAGITHKVDVKIDYIDAERLEDDDSLLAQLHNADAILVPGGFGERGTMGKIKAITYARENKVPYLGICLGMQLAVIEYARNVLHIDANSSEFDRKTAEPIIGLITEWLDERGELQIRSDDSDLGGTMRLGAQQAELVAGSKLAQIYGATNITERHRHRYEMNNRYIEPLEQAGMTISGYSAKQHLVESVELADHPWFVAVQFHPEFTSSPRGGHPLFNSFVKAAKNYSEAK.

Positions 1 to 266 are amidoligase domain; that stretch reads MTKFIFVTGG…DDLICERFGL (266 aa). Position 13 (Ser-13) interacts with CTP. Ser-13 provides a ligand contact to UTP. ATP-binding positions include 14–19 and Asp-71; that span reads SLGKGI. Mg(2+) contacts are provided by Asp-71 and Glu-140. Residues 147–149, 187–192, and Lys-223 each bind CTP; these read DIE and KTKPTQ. Residues 187–192 and Lys-223 each bind UTP; that span reads KTKPTQ. A Glutamine amidotransferase type-1 domain is found at 291 to 543; the sequence is TVAMVGKYVE…VKAAKNYSEA (253 aa). L-glutamine is bound at residue Gly-354. Cys-381 acts as the Nucleophile; for glutamine hydrolysis in catalysis. Residues 382–385, Glu-404, and Arg-471 each bind L-glutamine; that span reads LGMQ. Residues His-516 and Glu-518 contribute to the active site.

The protein belongs to the CTP synthase family. In terms of assembly, homotetramer.

It carries out the reaction UTP + L-glutamine + ATP + H2O = CTP + L-glutamate + ADP + phosphate + 2 H(+). The catalysed reaction is L-glutamine + H2O = L-glutamate + NH4(+). The enzyme catalyses UTP + NH4(+) + ATP = CTP + ADP + phosphate + 2 H(+). The protein operates within pyrimidine metabolism; CTP biosynthesis via de novo pathway; CTP from UDP: step 2/2. With respect to regulation, allosterically activated by GTP, when glutamine is the substrate; GTP has no effect on the reaction when ammonia is the substrate. The allosteric effector GTP functions by stabilizing the protein conformation that binds the tetrahedral intermediate(s) formed during glutamine hydrolysis. Inhibited by the product CTP, via allosteric rather than competitive inhibition. Its function is as follows. Catalyzes the ATP-dependent amination of UTP to CTP with either L-glutamine or ammonia as the source of nitrogen. Regulates intracellular CTP levels through interactions with the four ribonucleotide triphosphates. This chain is CTP synthase, found in Psychrobacter arcticus (strain DSM 17307 / VKM B-2377 / 273-4).